We begin with the raw amino-acid sequence, 871 residues long: Patatin-like phospholipase domain-containing protein CNBE2340 (871 aa).

A disordered region spans residues N20–R53. Residues S23–P33 show a composition bias toward low complexity. The helical transmembrane segment at W68–T88 threads the bilayer. One can recognise a PNPLA domain in the interval L243 to H435. The GXSXG motif lies at G274 to G278. Catalysis depends on S276, which acts as the Nucleophile. The Proton acceptor role is filled by D422. Disordered regions lie at residues A586–D707, L720–R748, and V760–A871. 2 stretches are compositionally biased toward polar residues: residues N594–E606 and P687–G706. Residues S721–R748 are compositionally biased toward low complexity. Residues V798–Y820 show a composition bias toward basic and acidic residues.

The protein belongs to the PLPL family.

Its subcellular location is the membrane. In terms of biological role, probable lipid hydrolase. In Cryptococcus neoformans var. neoformans serotype D (strain B-3501A) (Filobasidiella neoformans), this protein is Patatin-like phospholipase domain-containing protein CNBE2340.